A 252-amino-acid polypeptide reads, in one-letter code: Trans-aconitate 2-methyltransferase (252 aa).

Belongs to the methyltransferase superfamily. Tam family.

Its subcellular location is the cytoplasm. It carries out the reaction trans-aconitate + S-adenosyl-L-methionine = (E)-3-(methoxycarbonyl)pent-2-enedioate + S-adenosyl-L-homocysteine. Catalyzes the S-adenosylmethionine monomethyl esterification of trans-aconitate. The protein is Trans-aconitate 2-methyltransferase of Escherichia coli O6:K15:H31 (strain 536 / UPEC).